Reading from the N-terminus, the 473-residue chain is Lysophospholipid acyltransferase 5 (473 aa).

4 consecutive transmembrane segments (helical) span residues 20–40 (LLIS…FFYN), 43–63 (AQHQ…FNCG), 66–86 (VIHP…MAGT), and 88–108 (ASIY…YWFH). Catalysis depends on residues Asn315 and His351. Transmembrane regions (helical) follow at residues 341–361 (VITL…FLLF), 396–416 (FIWI…FLMF), and 431–451 (LYFI…MVLL). Positions 470–473 (KKEL) match the Di-lysine motif motif.

Belongs to the membrane-bound acyltransferase family.

Its subcellular location is the endoplasmic reticulum membrane. It catalyses the reaction a 1-acyl-sn-glycero-3-phosphocholine + an acyl-CoA = a 1,2-diacyl-sn-glycero-3-phosphocholine + CoA. The catalysed reaction is a 1-acyl-sn-glycero-3-phospho-L-serine + an acyl-CoA = a 1,2-diacyl-sn-glycero-3-phospho-L-serine + CoA. It carries out the reaction a 1-acyl-sn-glycero-3-phosphoethanolamine + an acyl-CoA = a 1,2-diacyl-sn-glycero-3-phosphoethanolamine + CoA. It functions in the pathway lipid metabolism; phospholipid metabolism. Functionally, probable acyltransferase which may mediate the conversion of lysophosphatidylcholine (1-acyl-sn-glycero-3-phosphocholine or LPC) into phosphatidylcholine (1,2-diacyl-sn-glycero-3-phosphocholine or PC) (LPCAT activity). May also catalyze the conversion of lysophosphatidylethanolamine (1-acyl-2-hydroxy-sn-glycero-3-phosphoethanolamine or LPE) into phosphatidylethanolamine (1,2-diacyl-sn-glycero-3-phosphoethanolamine or PE) (LPEAT activity), as well as the conversion of lysophosphatidylserine (1-acyl-2-hydroxy-sn-glycero-3-phospho-L-serine or LPS) into phosphatidylserine (1,2-diacyl-sn-glycero-3-phospho-L-serine or PS) (LPSAT activity). Required for incorporation of arachidonic acid into PC, PE, and PS. The protein is Lysophospholipid acyltransferase 5 (mboa-6) of Caenorhabditis elegans.